Here is a 109-residue protein sequence, read N- to C-terminus: uncharacterized protein (109 aa).

The protein to A.fulgidus AF1885.

This is an uncharacterized protein from Methanocaldococcus jannaschii (strain ATCC 43067 / DSM 2661 / JAL-1 / JCM 10045 / NBRC 100440) (Methanococcus jannaschii).